Here is a 117-residue protein sequence, read N- to C-terminus: Resistin-like gamma (117 aa).

The first 29 residues, 1-29 (MLTFNKMKTTTCSLLICISLLQLMVPVNT), serve as a signal peptide directing secretion. 5 disulfide bridges follow: C61/C114, C73/C113, C82/C99, C84/C101, and C88/C103.

This sequence belongs to the resistin/FIZZ family. Homodimer. Heterodimer with RETNLB. In terms of tissue distribution, expressed in colon, lung, spleen, pancreas, ileum and bone marrow (at protein level). In colon, found throughout the crypt and surface epithelium, including goblet cells (at protein level). Highest expression is observed in bone marrow, spleen and lung, with lower levels in other tissues. Detected at low levels in granulocytes, but not found in monocytes or lymphocytes. Has very weak expression in white adipose tissue.

The protein resides in the secreted. Its function is as follows. Probable hormone. Promotes chemotaxis in myeloid cells. This Mus musculus (Mouse) protein is Resistin-like gamma.